A 640-amino-acid polypeptide reads, in one-letter code: METVVRSCPFLSRVPQAFLQKAGKSLLFYAQNCPKMMEVGAKPAPRALSTAAVHYQQIKETPPASEKDKTAKAKVQQTPDGSQQSPDGTQLPSGHPLPATSQGTASKCPFLAAQMNQRGSSVFCKASLELQEDVQEMNAVRKEVAETSGGPSVVSVKTDGGDPSGLLKNFQDIMQKQRPERVSHLLQDDLPKSVSTFQYDRFFEKKIDEKKNDHTYRVFKTVNRRAHIFPMADDYSDSLITKKQVSVWCSNDYLGMSRHPRVCGAVMDTLKQHGAGAGGTRNISGTSKFHVDLERELADLHGKDAALLFSSCFVANDSTLFTLAKMMPGCEIYSDSGNHASMIQGIRNSRVPKYIFRHNDVSHLRELLQRSDPSVPKIVAFETVHSMDGAVCPLEELCDVAHEFGAITFVDEVHAVGLYGARGGGIGDRDGVMPKMDIISGTLGKAFGCVGGYIASTSSLIDTVRSYAAGFIFTTSLPPMLLAGALESVRILKSAEGRVLRRQHQRNVKLMRQMLMDAGLPVVHCPSHIIPVRVADAAKNTEVCDELMSRHNIYVQAINYPTVPRGEELLRIAPTPHHTPQMMNYFLENLLVTWKQVGLELEPHSSAECNFCRRPLHFEVMSEREKSYFSGLSKLVSAQA.

The transit peptide at 1-56 (METVVRSCPFLSRVPQAFLQKAGKSLLFYAQNCPKMMEVGAKPAPRALSTAAVHYQ) directs the protein to the mitochondrion. Disordered regions lie at residues 60–103 (ETPP…TSQG) and 143–163 (EVAE…GGDP). A compositionally biased stretch (polar residues) spans 75-92 (VQQTPDGSQQSPDGTQLP). Substrate contacts are provided by R217, S334, and K353. Pyridoxal 5'-phosphate is bound by residues S386, H414, and T442. The active site involves K445. The residue at position 445 (K445) is an N6-(pyridoxal phosphate)lysine. Pyridoxal 5'-phosphate-binding residues include T474 and T475. A substrate-binding site is contributed by T562. Hydroxyproline is present on P576.

The protein belongs to the class-II pyridoxal-phosphate-dependent aminotransferase family. Homodimer. Interacts (hydroxylated form) with VHL. The cofactor is pyridoxal 5'-phosphate. In terms of processing, in normoxia, is hydroxylated at Pro-576, promoting interaction with VHL, initiating ubiquitination and subsequent degradation via the proteasome. Ubiquitinated; in normoxia following hydroxylation and interaction with VHL, leading to its subsequent degradation via the proteasome.

Its subcellular location is the mitochondrion inner membrane. The enzyme catalyses succinyl-CoA + glycine + H(+) = 5-aminolevulinate + CO2 + CoA. It functions in the pathway porphyrin-containing compound metabolism; protoporphyrin-IX biosynthesis; 5-aminolevulinate from glycine: step 1/1. Its function is as follows. Catalyzes the pyridoxal 5'-phosphate (PLP)-dependent condensation of succinyl-CoA and glycine to form aminolevulinic acid (ALA), with CoA and CO2 as by-products. This is 5-aminolevulinate synthase, non-specific, mitochondrial (ALAS1) from Pongo abelii (Sumatran orangutan).